Here is a 267-residue protein sequence, read N- to C-terminus: tRNA pseudouridine synthase A (267 aa).

The Nucleophile role is filled by Asp51. Tyr109 contacts substrate.

Belongs to the tRNA pseudouridine synthase TruA family. In terms of assembly, homodimer.

It catalyses the reaction uridine(38/39/40) in tRNA = pseudouridine(38/39/40) in tRNA. Its function is as follows. Formation of pseudouridine at positions 38, 39 and 40 in the anticodon stem and loop of transfer RNAs. The protein is tRNA pseudouridine synthase A of Staphylococcus aureus (strain MSSA476).